The primary structure comprises 251 residues: uncharacterized protein (251 aa).

The first 18 residues, 1 to 18 (MKILIILSIILCSLFGRA), serve as a signal peptide directing secretion.

It belongs to the MlaA family.

This is an uncharacterized protein from Rickettsia prowazekii (strain Madrid E).